We begin with the raw amino-acid sequence, 581 residues long: Probable peptidoglycan D,D-transpeptidase PenA (581 aa).

A helical membrane pass occupies residues 28–48 (ISFVLMAMAVLFACLIARGLY). Ser310 serves as the catalytic Acyl-ester intermediate.

This sequence belongs to the transpeptidase family. FtsI subfamily.

It is found in the cell inner membrane. The enzyme catalyses Preferential cleavage: (Ac)2-L-Lys-D-Ala-|-D-Ala. Also transpeptidation of peptidyl-alanyl moieties that are N-acyl substituents of D-alanine.. It functions in the pathway cell wall biogenesis; peptidoglycan biosynthesis. In terms of biological role, catalyzes cross-linking of the peptidoglycan cell wall at the division septum. This is Probable peptidoglycan D,D-transpeptidase PenA from Neisseria gonorrhoeae.